Reading from the N-terminus, the 620-residue chain is 1-deoxy-D-xylulose-5-phosphate synthase (620 aa).

Residues His80 and Gly121 to Ser123 contribute to the thiamine diphosphate site. A Mg(2+)-binding site is contributed by Asp152. Thiamine diphosphate-binding positions include Gly153–Ala154, Asn181, Tyr288, and Glu370. Mg(2+) is bound at residue Asn181.

The protein belongs to the transketolase family. DXPS subfamily. As to quaternary structure, homodimer. Mg(2+) is required as a cofactor. Requires thiamine diphosphate as cofactor.

The enzyme catalyses D-glyceraldehyde 3-phosphate + pyruvate + H(+) = 1-deoxy-D-xylulose 5-phosphate + CO2. It functions in the pathway metabolic intermediate biosynthesis; 1-deoxy-D-xylulose 5-phosphate biosynthesis; 1-deoxy-D-xylulose 5-phosphate from D-glyceraldehyde 3-phosphate and pyruvate: step 1/1. Catalyzes the acyloin condensation reaction between C atoms 2 and 3 of pyruvate and glyceraldehyde 3-phosphate to yield 1-deoxy-D-xylulose-5-phosphate (DXP). The protein is 1-deoxy-D-xylulose-5-phosphate synthase of Shigella dysenteriae serotype 1 (strain Sd197).